Consider the following 423-residue polypeptide: Glutaminase (423 aa).

Residues 27–312 (GEVAQYIPQL…LSEDMGLHLM (286 aa)) are glutaminase. Residues Ser-69, Asn-119, Glu-165, Asn-172, Tyr-196, Tyr-248, and Val-266 each contribute to the substrate site. Residues 321–423 (AVRAIEERGD…SPQVDDPEEL (103 aa)) enclose the STAS domain.

It belongs to the glutaminase family. Homotetramer.

It carries out the reaction L-glutamine + H2O = L-glutamate + NH4(+). The sequence is that of Glutaminase (glsA) from Corynebacterium efficiens (strain DSM 44549 / YS-314 / AJ 12310 / JCM 11189 / NBRC 100395).